Here is a 418-residue protein sequence, read N- to C-terminus: Actin-like protein C08B11.6 (418 aa).

The protein belongs to the actin family. ARP6 subfamily.

The protein resides in the cytoplasm. It is found in the cytoskeleton. The sequence is that of Actin-like protein C08B11.6 (arp-6) from Caenorhabditis elegans.